We begin with the raw amino-acid sequence, 271 residues long: GATA transcription factor 19 (271 aa).

A disordered region spans residues Met-1–Ala-23. In terms of domain architecture, Tify spans Leu-33 to Gly-68. Residues Arg-95–Arg-137 form the CCT domain. The GATA-type zinc-finger motif lies at Cys-166–Cys-193. Residues Asn-238 to Ser-271 are disordered. A compositionally biased stretch (basic and acidic residues) spans Gln-252–Ser-271.

Belongs to the type IV zinc-finger family. Class C subfamily.

The protein resides in the nucleus. In terms of biological role, transcriptional activator that specifically binds 5'-GATA-3' or 5'-GAT-3' motifs within gene promoters. The polypeptide is GATA transcription factor 19 (Oryza sativa subsp. japonica (Rice)).